Here is a 448-residue protein sequence, read N- to C-terminus: Immunoglobulin G-binding protein G (448 aa).

The signal sequence occupies residues methionine 1 to alanine 33. 4 repeat units span residues leucine 104–leucine 140, leucine 179–leucine 215, threonine 228–glutamate 282, and threonine 298–glutamate 352. Residues leucine 104–leucine 215 form a 2 X 37 AA repeats region. The 2 X 55 AA repeats stretch occupies residues threonine 228–glutamate 352. The disordered stretch occupies residues proline 358–asparagine 422. Basic and acidic residues predominate over residues alanine 384–glutamate 412. Residues aspartate 386–lysine 410 are 5 X 5 AA repeats of [DE]-D-A-K-K. The short motif at leucine 414 to glycine 418 is the LPXTG sorting signal element. Threonine 417 is subject to Pentaglycyl murein peptidoglycan amidated threonine. Residues glycine 418–aspartate 448 constitute a propeptide, removed by sortase.

The protein localises to the secreted. Its subcellular location is the cell wall. In terms of biological role, binds to the constant Fc region of IgG with high affinity. This chain is Immunoglobulin G-binding protein G (spg), found in Streptococcus sp. group G.